A 376-amino-acid polypeptide reads, in one-letter code: MSISIMTETRPESAEQQHHEVLQRPSDEPCSGCKQLQKDVAKTISMVMERMDKLQYRLDELLKENNELKSSSVSSGKASPSPAESRSSPKLVETVVAPVSGARKRKPKERSPPAAASPLPDFSNLMNGFMFDPLNMSNPNGMMQLLSMVQQQQQQQQHHQHIENQQSVSPPQSKSVKIEDPMDQDVKQEESERSDIPTATEAQNLLDALTAQFSSNGQATSTTSPPSSSSQVQAVIEAVATPSSQSQDSSMFEKTETSGDPNAARCSNCRTDKTTAWRRDAEGKLVCNPCGLYYRLHKVRRPIEMRKNHIQQRYRRKNKEKESSAATQIFNQLLTQMPTMATGGVSTDGAINTFNLLEQISQFTQAQELMNSSATF.

4 disordered regions span residues 1-33 (MSIS…CSGC), 65-122 (NNEL…LPDF), 148-197 (MVQQ…SDIP), and 240-264 (ATPS…PNAA). A compositionally biased stretch (basic and acidic residues) spans 9 to 27 (TRPESAEQQHHEVLQRPSD). 2 stretches are compositionally biased toward low complexity: residues 68-89 (LKSS…RSSP) and 165-175 (QQSVSPPQSKS). Residues 176–195 (VKIEDPMDQDVKQEESERSD) show a composition bias toward basic and acidic residues. Residues 241–250 (TPSSQSQDSS) show a composition bias toward polar residues. The segment at 266 to 290 (CSNCRTDKTTAWRRDAEGKLVCNPC) adopts a GATA-type zinc-finger fold.

As to expression, expressed in differentiated seam cells. Expressed in the head and trunk.

The protein resides in the nucleus. Functionally, probable transcription factor. Involved in embryonic development and in vulval development in larvae, acting redundantly, at least in part, with elt-6. Perhaps acting together with elt-6, may form a positive feedback loop to initiate and maintain lin-39 gene expression to ensure proper vulval precursor cell (VPC) fate specification. Together with elt-6, acts as a downstream target of the Wnt/beta-catenin asymmetry pathway, required to adopt or maintain the seam cell fate. Required in seam cells, acting redundantly with elt-6, to promote production of alae, expression of several seam-specific genes and maintenance of seam cells in an unfused state. Plays a role in longevity. May form a transcriptional circuit with GATA factors elt-3 and elt-6. This chain is Putative transcription factor egl-18, found in Caenorhabditis elegans.